The sequence spans 1165 residues: Immunoglobulin superfamily member 3 (1165 aa).

A signal peptide spans 1–20 (MGTAAGLLLAALLLAGTSWA). The Extracellular segment spans residues 21–1095 (QREVNIQQGP…LQSTICANDA (1075 aa)). 8 consecutive Ig-like C2-type domains span residues 22-139 (REVN…AKMN), 144-262 (PDTL…WFPL), 276-386 (PTDK…RGPS), 406-527 (PLRT…WQLL), 545-661 (FAVT…WTQL), 678-800 (PRLQ…EEAS), 810-934 (PDAN…WYKR), and 951-1067 (PALQ…WYLL). 2 disulfide bridges follow: Cys-43–Cys-121 and Cys-168–Cys-246. The short motif at 250–252 (EWI) is the EWI motif element. Intrachain disulfides connect Cys-302–Cys-376, Cys-432–Cys-511, Cys-566–Cys-645, Cys-701–Cys-779, Cys-835–Cys-918, and Cys-974–Cys-1051. The chain crosses the membrane as a helical span at residues 1096 to 1116 (LFYLVFFYPFPIFGILIITIL). Over 1117–1165 (LVRFRHRPTSKPGEGKNGVPLLWIKEPHLNYSPTCLEPPVLSIHPGTID) the chain is Cytoplasmic.

Its subcellular location is the membrane. This chain is Immunoglobulin superfamily member 3 (igsf3), found in Xenopus laevis (African clawed frog).